Consider the following 114-residue polypeptide: Replication initiation control protein YabA (114 aa).

His-84, Cys-86, Cys-102, and Cys-105 together coordinate Zn(2+).

The protein belongs to the YabA family. As to quaternary structure, homotetramer. Interacts with both DnaA and DnaN, acting as a bridge between these two proteins. Requires Zn(2+) as cofactor.

It localises to the cytoplasm. It is found in the nucleoid. In terms of biological role, involved in control of chromosome replication initiation. Inhibits the cooperative binding of DnaA to the oriC region, thus negatively regulating initiation of chromosome replication. Inhibits the ability of DnaA-ATP to form a helix on DNA; does not disassemble preformed DnaA-DNA helices. Decreases the residence time of DnaA on the chromosome at its binding sites (oriC, replication forks and promoter-binding sites). Tethers DnaA to the replication machinery via the DNA polymerase beta sliding clamp subunit (dnaN). Associates with oriC and other DnaA targets on the chromosome in a DnaA-dependent manner. This is Replication initiation control protein YabA from Ligilactobacillus salivarius (strain UCC118) (Lactobacillus salivarius).